A 145-amino-acid polypeptide reads, in one-letter code: Putative pre-16S rRNA nuclease (145 aa).

It belongs to the YqgF nuclease family.

It is found in the cytoplasm. Its function is as follows. Could be a nuclease involved in processing of the 5'-end of pre-16S rRNA. The sequence is that of Putative pre-16S rRNA nuclease from Tropheryma whipplei (strain Twist) (Whipple's bacillus).